A 318-amino-acid polypeptide reads, in one-letter code: Methionyl-tRNA formyltransferase (318 aa).

112-115 (SILP) provides a ligand contact to (6S)-5,6,7,8-tetrahydrofolate.

It belongs to the Fmt family.

The enzyme catalyses L-methionyl-tRNA(fMet) + (6R)-10-formyltetrahydrofolate = N-formyl-L-methionyl-tRNA(fMet) + (6S)-5,6,7,8-tetrahydrofolate + H(+). Functionally, attaches a formyl group to the free amino group of methionyl-tRNA(fMet). The formyl group appears to play a dual role in the initiator identity of N-formylmethionyl-tRNA by promoting its recognition by IF2 and preventing the misappropriation of this tRNA by the elongation apparatus. This is Methionyl-tRNA formyltransferase from Shewanella baltica (strain OS195).